We begin with the raw amino-acid sequence, 822 residues long: Tubulin polyglutamylase TTLL6 (822 aa).

The segment at 1-24 (MLQCLTSESEEGAEEREESSTEDL) is disordered. Positions 8–24 (ESEEGAEEREESSTEDL) are enriched in acidic residues. In terms of domain architecture, TTL spans 57–400 (KKRLVINLSN…GNCDKKKVLE (344 aa)). Residues lysine 174, 180 to 181 (QG), 202 to 205 (QLYI), and 215 to 217 (KFD) contribute to the ATP site. A protein is bound at residue glutamine 180. Arginine 241 contacts L-glutamate. 263–264 (TN) contributes to the ATP binding site. Residues tyrosine 265, serine 266, and lysine 283 each contribute to the L-glutamate site. Residues aspartate 346, glutamate 359, and asparagine 361 each coordinate Mg(2+). Histidine 362 provides a ligand contact to a protein. Residues 371–450 (KLDKEVKDSL…CGGFRLIYPG (80 aa)) are c-MTBD region. Lysine 377 contacts L-glutamate. Disordered regions lie at residues 736–772 (PLFPAPKSQYPTLSKERCPHSRSSSRKKEMNSPSVFV) and 791–822 (TQARLDPRPSRSHSGTTTRDSSTQDPKHTATA). The span at 802 to 814 (SHSGTTTRDSSTQ) shows a compositional bias: polar residues.

It belongs to the tubulin--tyrosine ligase family. Found in a complex with CEP41. Mg(2+) is required as a cofactor. As to expression, highly expressed in testis. Expressed in brain, heart, kidney, liver, lung, muscle and trachea. In the brain, specifically expressed in ependymal cilia.

The protein resides in the cytoplasm. It localises to the cytoskeleton. The protein localises to the cilium axoneme. Its subcellular location is the cilium basal body. The catalysed reaction is L-glutamyl-[protein] + L-glutamate + ATP = gamma-L-glutamyl-L-glutamyl-[protein] + ADP + phosphate + H(+). It catalyses the reaction (L-glutamyl)(n)-gamma-L-glutamyl-L-glutamyl-[protein] + L-glutamate + ATP = (L-glutamyl)(n+1)-gamma-L-glutamyl-L-glutamyl-[protein] + ADP + phosphate + H(+). Its function is as follows. Polyglutamylase which modifies both tubulin and non-tubulin proteins, generating alpha-linked polyglutamate side chains on the gamma-carboxyl group of specific glutamate residues of target proteins. Preferentially mediates ATP-dependent long polyglutamate chain elongation over the initiation step of the polyglutamylation reaction. Preferentially modifies the alpha-tubulin tail over a beta-tail. Promotes tubulin polyglutamylation which stimulates spastin/SPAST-mediated microtubule severing, thereby regulating microtubule functions. Mediates microtubule polyglutamylation in primary cilia axoneme which is important for ciliary structural formation and motility. Mediates microtubule polyglutamylation in motile cilia, necessary for the regulation of ciliary coordinated beating. Polyglutamylates non-tubulin protein nucleotidyltransferase CGAS, leading to CGAS DNA-binding inhibition, thereby preventing antiviral defense response. The protein is Tubulin polyglutamylase TTLL6 of Mus musculus (Mouse).